Here is a 289-residue protein sequence, read N- to C-terminus: Spore coat polysaccharide biosynthesis protein SpsD (289 aa).

One can recognise an N-acetyltransferase domain in the interval 137–289; the sequence is FELGPPEPGD…YHIWPGKEAK (153 aa).

The protein operates within spore coat biogenesis; spore coat polysaccharide biosynthesis. This Bacillus subtilis (strain 168) protein is Spore coat polysaccharide biosynthesis protein SpsD (spsD).